Consider the following 401-residue polypeptide: Probable sodium/metabolite cotransporter BASS5, chloroplastic (401 aa).

The N-terminal 46 residues, 1-46 (MAPNAAVLVRPHIAGVHHLPTGRRLPRLAPPQAVSPPFSRQKGSVV), are a transit peptide targeting the chloroplast. The next 9 helical transmembrane spans lie at 93–113 (TIIP…PPSF), 122–142 (APAL…KDFI), 159–179 (FIIK…IFNL), 185–205 (AGIM…ATFL), 215–235 (IVMT…LSYF), 247–267 (GMMS…LLLN), 273–293 (LCSA…ALCV), 299–319 (INIK…LFAF), and 372–392 (LVGV…FALV).

The protein belongs to the bile acid:sodium symporter (BASS) (TC 2.A.28) family.

The protein resides in the membrane. The protein localises to the plastid. Its subcellular location is the chloroplast envelope. Its function is as follows. May function as sodium-coupled metabolite transporter across the chloroplast envelope. In Oryza sativa subsp. indica (Rice), this protein is Probable sodium/metabolite cotransporter BASS5, chloroplastic (BASS5).